We begin with the raw amino-acid sequence, 396 residues long: Stearoyl-[acyl-carrier-protein] 9-desaturase, chloroplastic (396 aa).

The transit peptide at 1–33 (MALKLNPFLSQTQKLPSFALPPMASTRSPKFYM) directs the protein to the chloroplast. Fe cation is bound by residues glutamate 138, glutamate 176, histidine 179, glutamate 229, glutamate 262, and histidine 265.

It belongs to the fatty acid desaturase type 2 family. Homodimer. It depends on Fe(2+) as a cofactor. In terms of tissue distribution, higher levels in developing seeds than in leaf and root tissues.

The protein localises to the plastid. Its subcellular location is the chloroplast. The enzyme catalyses octadecanoyl-[ACP] + 2 reduced [2Fe-2S]-[ferredoxin] + O2 + 2 H(+) = (9Z)-octadecenoyl-[ACP] + 2 oxidized [2Fe-2S]-[ferredoxin] + 2 H2O. Its pathway is lipid metabolism; fatty acid metabolism. In terms of biological role, converts stearoyl-ACP to oleoyl-ACP by introduction of a cis double bond between carbons 9 and 10 of the acyl chain. This chain is Stearoyl-[acyl-carrier-protein] 9-desaturase, chloroplastic, found in Ricinus communis (Castor bean).